A 431-amino-acid polypeptide reads, in one-letter code: Metal-binding activator 1 (431 aa).

The segment at residues methionine 1–glycine 40 is a DNA-binding region (copper-fist). 4 residues coordinate Zn(2+): cysteine 11, cysteine 14, cysteine 23, and histidine 25.

Its subcellular location is the nucleus. Functionally, copper ion-sensing transcription factor which activates transcription of the CTR1 copper transporter under low-copper conditions. Promotes filamentous and invasive growth. The protein is Metal-binding activator 1 (MAC1) of Candida albicans (strain SC5314 / ATCC MYA-2876) (Yeast).